The primary structure comprises 291 residues: ATP synthase gamma chain (291 aa).

Belongs to the ATPase gamma chain family. As to quaternary structure, F-type ATPases have 2 components, CF(1) - the catalytic core - and CF(0) - the membrane proton channel. CF(1) has five subunits: alpha(3), beta(3), gamma(1), delta(1), epsilon(1). CF(0) has three main subunits: a, b and c.

The protein resides in the cell inner membrane. Produces ATP from ADP in the presence of a proton gradient across the membrane. The gamma chain is believed to be important in regulating ATPase activity and the flow of protons through the CF(0) complex. In Syntrophus aciditrophicus (strain SB), this protein is ATP synthase gamma chain.